Here is a 159-residue protein sequence, read N- to C-terminus: 2-C-methyl-D-erythritol 2,4-cyclodiphosphate synthase (159 aa).

A divalent metal cation is bound by residues D10 and H12. 4-CDP-2-C-methyl-D-erythritol 2-phosphate-binding positions include D10–H12 and H37–S38. H45 lines the a divalent metal cation pocket. 4-CDP-2-C-methyl-D-erythritol 2-phosphate is bound by residues D59–G61, F64–D68, A103–L109, T135–E138, F142, and R145.

Belongs to the IspF family. Homotrimer. Requires a divalent metal cation as cofactor.

It catalyses the reaction 4-CDP-2-C-methyl-D-erythritol 2-phosphate = 2-C-methyl-D-erythritol 2,4-cyclic diphosphate + CMP. It functions in the pathway isoprenoid biosynthesis; isopentenyl diphosphate biosynthesis via DXP pathway; isopentenyl diphosphate from 1-deoxy-D-xylulose 5-phosphate: step 4/6. In terms of biological role, involved in the biosynthesis of isopentenyl diphosphate (IPP) and dimethylallyl diphosphate (DMAPP), two major building blocks of isoprenoid compounds. Catalyzes the conversion of 4-diphosphocytidyl-2-C-methyl-D-erythritol 2-phosphate (CDP-ME2P) to 2-C-methyl-D-erythritol 2,4-cyclodiphosphate (ME-CPP) with a corresponding release of cytidine 5-monophosphate (CMP). The protein is 2-C-methyl-D-erythritol 2,4-cyclodiphosphate synthase of Francisella tularensis subsp. holarctica (strain OSU18).